Reading from the N-terminus, the 389-residue chain is GTPase Obg (389 aa).

Residues 1-159 (MKFVDEAVIR…RSLKLELMLL (159 aa)) enclose the Obg domain. Residues 122–144 (FHGLGNTRFKSSTNRAPRQKTLG) form a disordered region. The OBG-type G domain occupies 160-333 (ADVGLLGMPN…LSLKLIDFIE (174 aa)). Residues 166 to 173 (GMPNAGKS), 191 to 195 (FTTLV), 213 to 216 (DIPG), 283 to 286 (NKTD), and 314 to 316 (SAY) contribute to the GTP site. Mg(2+) contacts are provided by S173 and T193.

The protein belongs to the TRAFAC class OBG-HflX-like GTPase superfamily. OBG GTPase family. In terms of assembly, monomer. The cofactor is Mg(2+).

Its subcellular location is the cytoplasm. In terms of biological role, an essential GTPase which binds GTP, GDP and possibly (p)ppGpp with moderate affinity, with high nucleotide exchange rates and a fairly low GTP hydrolysis rate. Plays a role in control of the cell cycle, stress response, ribosome biogenesis and in those bacteria that undergo differentiation, in morphogenesis control. The polypeptide is GTPase Obg (Shewanella woodyi (strain ATCC 51908 / MS32)).